Consider the following 527-residue polypeptide: Glutamate--cysteine ligase (527 aa).

This sequence belongs to the glutamate--cysteine ligase type 1 family. Type 1 subfamily.

The enzyme catalyses L-cysteine + L-glutamate + ATP = gamma-L-glutamyl-L-cysteine + ADP + phosphate + H(+). It participates in sulfur metabolism; glutathione biosynthesis; glutathione from L-cysteine and L-glutamate: step 1/2. In Pseudomonas paraeruginosa (strain DSM 24068 / PA7) (Pseudomonas aeruginosa (strain PA7)), this protein is Glutamate--cysteine ligase.